The primary structure comprises 62 residues: Large ribosomal subunit protein eL24 (62 aa).

Zn(2+)-binding residues include C6, C9, C32, and C36. The C4-type zinc-finger motif lies at 6–36 (CSFCEGTIEPGCGKKYVKKDGSVMHFCSSKC).

The protein belongs to the eukaryotic ribosomal protein eL24 family. In terms of assembly, part of the 50S ribosomal subunit. Forms a cluster with proteins L3 and L14. Zn(2+) is required as a cofactor.

Its function is as follows. Binds to the 23S rRNA. The protein is Large ribosomal subunit protein eL24 of Methanococcus maripaludis (strain C5 / ATCC BAA-1333).